A 71-amino-acid polypeptide reads, in one-letter code: Sec-independent protein translocase protein TatA (71 aa).

The helical transmembrane segment at 1–21 threads the bilayer; it reads MGSFSLLHWLVVLVIVLLVFG. Residues 43 to 71 form a disordered region; the sequence is LHEDDKPTDQLGSTSQSTASGPQQDHGKH. Over residues 52-65 the composition is skewed to polar residues; it reads QLGSTSQSTASGPQ.

The protein belongs to the TatA/E family. The Tat system comprises two distinct complexes: a TatABC complex, containing multiple copies of TatA, TatB and TatC subunits, and a separate TatA complex, containing only TatA subunits. Substrates initially bind to the TatABC complex, which probably triggers association of the separate TatA complex to form the active translocon.

The protein localises to the cell inner membrane. Functionally, part of the twin-arginine translocation (Tat) system that transports large folded proteins containing a characteristic twin-arginine motif in their signal peptide across membranes. TatA could form the protein-conducting channel of the Tat system. This chain is Sec-independent protein translocase protein TatA, found in Xylella fastidiosa (strain M12).